Here is a 100-residue protein sequence, read N- to C-terminus: Small ribosomal subunit protein bS20 (100 aa).

Belongs to the bacterial ribosomal protein bS20 family.

Its function is as follows. Binds directly to 16S ribosomal RNA. The protein is Small ribosomal subunit protein bS20 of Prochlorococcus marinus (strain MIT 9211).